We begin with the raw amino-acid sequence, 202 residues long: Small ribosomal subunit protein uS4 (202 aa).

The S4 RNA-binding domain occupies Ser-91 to Asp-168.

Belongs to the universal ribosomal protein uS4 family. In terms of assembly, part of the 30S ribosomal subunit. Contacts protein S5. The interaction surface between S4 and S5 is involved in control of translational fidelity.

Functionally, one of the primary rRNA binding proteins, it binds directly to 16S rRNA where it nucleates assembly of the body of the 30S subunit. Its function is as follows. With S5 and S12 plays an important role in translational accuracy. The sequence is that of Small ribosomal subunit protein uS4 from Ehrlichia canis (strain Jake).